The primary structure comprises 139 residues: Large ribosomal subunit protein uL14A (139 aa).

The protein belongs to the universal ribosomal protein uL14 family. As to quaternary structure, component of the large ribosomal subunit (LSU). Mature yeast ribosomes consist of a small (40S) and a large (60S) subunit. The 40S small subunit contains 1 molecule of ribosomal RNA (18S rRNA) and at least 33 different proteins. The large 60S subunit contains 3 rRNA molecules (25S, 5.8S and 5S rRNA) and at least 46 different proteins.

The protein localises to the cytoplasm. Its subcellular location is the nucleus. In terms of biological role, component of the ribosome, a large ribonucleoprotein complex responsible for the synthesis of proteins in the cell. The small ribosomal subunit (SSU) binds messenger RNAs (mRNAs) and translates the encoded message by selecting cognate aminoacyl-transfer RNA (tRNA) molecules. The large subunit (LSU) contains the ribosomal catalytic site termed the peptidyl transferase center (PTC), which catalyzes the formation of peptide bonds, thereby polymerizing the amino acids delivered by tRNAs into a polypeptide chain. The nascent polypeptides leave the ribosome through a tunnel in the LSU and interact with protein factors that function in enzymatic processing, targeting, and the membrane insertion of nascent chains at the exit of the ribosomal tunnel. This is Large ribosomal subunit protein uL14A (rpl2301) from Schizosaccharomyces pombe (strain 972 / ATCC 24843) (Fission yeast).